We begin with the raw amino-acid sequence, 601 residues long: Beta-phellandrene synthase (601 aa).

The transit peptide at 1-35 directs the protein to the chloroplast; it reads MSTISIHHVGILRNPLPSKNKRALINNPWSLSLPR. D356 and D360 together coordinate Mn(2+). Positions 356-360 match the DDXXD motif motif; the sequence is DDVYD. 2 homodimerization regions span residues 362–368 and 434–471; these read YGTLDEL and EAKW…LSIP. Mn(2+) is bound by residues D499 and E507.

This sequence belongs to the terpene synthase family. As to quaternary structure, homodimer. Mn(2+) is required as a cofactor. Requires Mg(2+) as cofactor. In terms of tissue distribution, expressed in peltate glandular trichomes. Present at low levels in flowers, leaves and stems.

The protein resides in the plastid. It is found in the chloroplast. It catalyses the reaction (2E)-geranyl diphosphate = beta-phellandrene + diphosphate. It carries out the reaction (2E)-geranyl diphosphate = (1R,5R)-sabinene + diphosphate. Its pathway is secondary metabolite biosynthesis; terpenoid biosynthesis. In terms of biological role, involved in the biosynthesis of phenolic monoterpenes natural products. Monoterpene synthase that catalyzes mainly the formation of olefins such as sabinene and beta-phellandrene, and minor amounts of other monoterpenes (e.g. myrcene, gamma-terpinene, alpha-thujene and alpha-pinene) from geranyl diphosphate (GPP). The chain is Beta-phellandrene synthase from Origanum vulgare (Wild marjoram).